Here is a 558-residue protein sequence, read N- to C-terminus: MDIKRTVLWVIFFMSAVMLFDNWQRSHGRPSMFFPNVTQTNTASNATNGNGASGASAAAAANALPAAATGAAPATTAPAAQAQLVRFSTDVYNGEIDTRGGTLAKLTLTKAGDGKQPDLSVTLFDHTANHTYLARTGLLGGDFPNHNDVYAQVAGPTSLAADQNTLKLSFESPVKGGVKVVKTYTFTRGSYVIGVDTKIENVGAAPVTPSVYMELVRDNSSVETPMFSHTFLGPAVYTDQKHFQKITFGDIDKNKADYVTSADNGWIAMVQHYFASAWIPQSGAKRDIYVEKIDPTLYRVGVKQPVAAIAPGQSADVSARLFAGPEEERMLEGIAPGLELVKDYGWVTIIAKPLFWLLEKIHGFVGNWGWAIVLLTLLIKAVFFPLSAASYKSMARMKEITPRMQALRERFKSDPQKMNAALMELYKTEKVNPFGGCLPVVIQIPVFISLYWVLLASVEMRGAPWVLWIHDLSQRDPYFILPVLMAVSMFVQTKLNPTPPDPVQAKMMMFMPIAFSVMFFFFPAGLVLYYVVNNVLSIAQQYYITRTLGGAAAKKKAS.

The next 5 membrane-spanning stretches (helical) occupy residues 3–23 (IKRT…FDNW), 364–384 (FVGN…AVFF), 438–458 (LPVV…LASV), 477–497 (PYFI…KLNP), and 508–528 (MMFM…GLVL).

It belongs to the OXA1/ALB3/YidC family. Type 1 subfamily. Interacts with the Sec translocase complex via SecD. Specifically interacts with transmembrane segments of nascent integral membrane proteins during membrane integration.

It is found in the cell inner membrane. In terms of biological role, required for the insertion and/or proper folding and/or complex formation of integral membrane proteins into the membrane. Involved in integration of membrane proteins that insert both dependently and independently of the Sec translocase complex, as well as at least some lipoproteins. Aids folding of multispanning membrane proteins. The polypeptide is Membrane protein insertase YidC (Burkholderia pseudomallei (strain K96243)).